The following is a 950-amino-acid chain: Lon protease homolog, mitochondrial (950 aa).

The transit peptide at Met1–Gly65 directs the protein to the mitochondrion. Disordered regions lie at residues Trp67 to Gly94 and Pro212 to Lys243. A Lon N-terminal domain is found at Leu112–Phe360. A compositionally biased stretch (basic residues) spans Lys224 to Lys233. ATP is bound at residue Gly513–Thr520. The Lon proteolytic domain occupies Val749–Leu939. Active-site residues include Ser845 and Lys888.

Belongs to the peptidase S16 family. As to quaternary structure, homohexamer. Organized in a ring with a central cavity. The ATP-binding and proteolytic domains (AP-domain) form a hexameric chamber, while the N-terminal domain is arranged as a trimer of dimers. DNA and RNA binding is stimulated by substrate and inhibited by ATP binding. Interacts with TWNK and mitochondrial DNA polymerase subunit POLG.

It localises to the mitochondrion matrix. The enzyme catalyses Hydrolysis of proteins in presence of ATP.. Functionally, ATP-dependent serine protease that mediates the selective degradation of misfolded, unassembled or oxidatively damaged polypeptides as well as certain short-lived regulatory proteins in the mitochondrial matrix. Endogenous substrates include mitochondrial steroidogenic acute regulatory (StAR) protein, DELE1, helicase Twinkle (TWNK) and the large ribosomal subunit protein MRPL32/bL32m. MRPL32/bL32m is protected from degradation by LONP1 when it is bound to a nucleic acid (RNA), but TWNK is not. May also have a chaperone function in the assembly of inner membrane protein complexes. Participates in the regulation of mitochondrial gene expression and in the maintenance of the integrity of the mitochondrial genome. Binds to mitochondrial promoters and RNA in a single-stranded, site-specific, and strand-specific manner. May regulate mitochondrial DNA replication and/or gene expression using site-specific, single-stranded DNA binding to target the degradation of regulatory proteins binding to adjacent sites in mitochondrial promoters. The chain is Lon protease homolog, mitochondrial (Lonp1) from Rattus norvegicus (Rat).